The chain runs to 356 residues: MTIRALVVDDSALIRKVLSDILNEDPKIRVVGTAVNGKDGLEKVIKLRPDVVLLDNVMPVLDGLKTLARIMKEQPTPVVIVSALGERAEEITLTAFEYGAVDVIEKPSGILSQSMPEMAEEICRKVRTAPKANLKNLECMRDSEPLNPEKRETKENRVLKKAAPRNILAIGASTGGPRALEKLICSLPAELPAAVLVVQHMPPGFTASLSKRLDSKSALRVKEAQEGDRVEDGTVLIAPGNYHMEIVRNKVNSLEEETIHLSCGPKELGSRPSVNVLFRSIASVYGSRVISLVLTGMNCDGADGAEEIKKMGGKVIAEARSSCVVYGMPGEIVRRNLADLVLPLDKMAEEIIRIIG.

A Response regulatory domain is found at 4-121 (RALVVDDSAL…SQSMPEMAEE (118 aa)). Asp-55 bears the 4-aspartylphosphate mark. One can recognise a CheB-type methylesterase domain in the interval 161–356 (KAAPRNILAI…MAEEIIRIIG (196 aa)). Residues Ser-173, His-200, and Asp-300 contribute to the active site.

This sequence belongs to the CheB family. Post-translationally, phosphorylated by CheA. Phosphorylation of the N-terminal regulatory domain activates the methylesterase activity.

It is found in the cytoplasm. The catalysed reaction is [protein]-L-glutamate 5-O-methyl ester + H2O = L-glutamyl-[protein] + methanol + H(+). It carries out the reaction L-glutaminyl-[protein] + H2O = L-glutamyl-[protein] + NH4(+). In terms of biological role, involved in chemotaxis. Part of a chemotaxis signal transduction system that modulates chemotaxis in response to various stimuli. Catalyzes the demethylation of specific methylglutamate residues introduced into the chemoreceptors (methyl-accepting chemotaxis proteins or MCP) by CheR. Also mediates the irreversible deamidation of specific glutamine residues to glutamic acid. This is Protein-glutamate methylesterase/protein-glutamine glutaminase 2 from Methanosarcina acetivorans (strain ATCC 35395 / DSM 2834 / JCM 12185 / C2A).